Here is a 268-residue protein sequence, read N- to C-terminus: Indole-3-glycerol phosphate synthase (268 aa).

It belongs to the TrpC family.

It catalyses the reaction 1-(2-carboxyphenylamino)-1-deoxy-D-ribulose 5-phosphate + H(+) = (1S,2R)-1-C-(indol-3-yl)glycerol 3-phosphate + CO2 + H2O. It participates in amino-acid biosynthesis; L-tryptophan biosynthesis; L-tryptophan from chorismate: step 4/5. The sequence is that of Indole-3-glycerol phosphate synthase from Lachnospira eligens (strain ATCC 27750 / DSM 3376 / VPI C15-48 / C15-B4) (Eubacterium eligens).